A 376-amino-acid chain; its full sequence is Alanine racemase (376 aa).

The active-site Proton acceptor; specific for D-alanine is the lysine 40. Lysine 40 carries the N6-(pyridoxal phosphate)lysine modification. Position 138 (arginine 138) interacts with substrate. Residue tyrosine 270 is the Proton acceptor; specific for L-alanine of the active site. Methionine 317 is a substrate binding site.

The protein belongs to the alanine racemase family. Pyridoxal 5'-phosphate serves as cofactor.

The catalysed reaction is L-alanine = D-alanine. It functions in the pathway amino-acid biosynthesis; D-alanine biosynthesis; D-alanine from L-alanine: step 1/1. Catalyzes the interconversion of L-alanine and D-alanine. May also act on other amino acids. The chain is Alanine racemase (alr) from Lactobacillus delbrueckii subsp. bulgaricus (strain ATCC BAA-365 / Lb-18).